The sequence spans 122 residues: Large ribosomal subunit protein bL12 (122 aa).

This sequence belongs to the bacterial ribosomal protein bL12 family. Homodimer. Part of the ribosomal stalk of the 50S ribosomal subunit. Forms a multimeric L10(L12)X complex, where L10 forms an elongated spine to which 2 to 4 L12 dimers bind in a sequential fashion. Binds GTP-bound translation factors.

Forms part of the ribosomal stalk which helps the ribosome interact with GTP-bound translation factors. Is thus essential for accurate translation. The sequence is that of Large ribosomal subunit protein bL12 from Staphylococcus saprophyticus subsp. saprophyticus (strain ATCC 15305 / DSM 20229 / NCIMB 8711 / NCTC 7292 / S-41).